We begin with the raw amino-acid sequence, 141 residues long: HTH-type transcriptional repressor NsrR (141 aa).

One can recognise an HTH rrf2-type domain in the interval 2–129 (QLTSFTDYGL…DNYTLADLVE (128 aa)). The H-T-H motif DNA-binding region spans 28-51 (ISQVTEVYGVSRNHMVKIINQLSR). 3 residues coordinate [2Fe-2S] cluster: Cys91, Cys96, and Cys102.

The cofactor is [2Fe-2S] cluster.

In terms of biological role, nitric oxide-sensitive repressor of genes involved in protecting the cell against nitrosative stress. May require iron for activity. This chain is HTH-type transcriptional repressor NsrR, found in Enterobacter sp. (strain 638).